A 2204-amino-acid polypeptide reads, in one-letter code: Non-reducing polyketide synthase CTB1 (2204 aa).

The interval 11-250 (AFGDQTYDCS…TRLPITAPYH (240 aa)) is N-terminal acylcarrier protein transacylase domain (SAT). The Ketosynthase family 3 (KS3) domain maps to 382–815 (KSPIAILAAS…GGNTCLVLED (434 aa)). Active-site for beta-ketoacyl synthase activity residues include Cys-554, His-689, and His-734. The interval 923–1224 (AFTGQGSAFE…QTFASINKDK (302 aa)) is malonyl-CoA:ACP transacylase (MAT) domain. Positions 1299 to 1619 (SSSIHKVITN…VPKRLMHYIV (321 aa)) are product template (PT) domain. Residues 1303-1439 (HKVITNTITA…CKIRFGSLEK (137 aa)) are N-terminal hotdog fold. The region spanning 1303-1616 (HKVITNTITA…LQGVPKRLMH (314 aa)) is the PKS/mFAS DH domain. His-1336 acts as the Proton acceptor; for dehydratase activity in catalysis. A C-terminal hotdog fold region spans residues 1468–1616 (TYRFSKGMIY…LQGVPKRLMH (149 aa)). Asp-1528 serves as the catalytic Proton donor; for dehydratase activity. The segment at 1625 to 1674 (KASGPPTEKKGSSPPVEKKASAPVAPTRPAIQRKNASIPPPATQVTPQNK) is disordered. Basic and acidic residues predominate over residues 1631 to 1644 (TEKKGSSPPVEKKA). Carrier domains lie at 1679 to 1756 (PSVS…TRLS) and 1783 to 1865 (DPSP…SGST). O-(pantetheine 4'-phosphoryl)serine is present on residues Ser-1716 and Ser-1824. Over residues 1864–1875 (STESFDSTTTKP) the composition is skewed to polar residues. The disordered stretch occupies residues 1864–1931 (STESFDSTTT…PPKGRIPPAW (68 aa)). Residues 1880–1895 (ATPPLTDSSASSPPSS) show a composition bias toward low complexity. Residues 1945-2195 (ILFLFPDGAG…SGAQMLVEHM (251 aa)) are thioesterase (TE) domain.

Requires pantetheine 4'-phosphate as cofactor.

The enzyme catalyses 6 malonyl-CoA + acetyl-CoA + 6 H(+) = nor-toralactone + 6 CO2 + 7 CoA + 2 H2O. Its pathway is mycotoxin biosynthesis. Its function is as follows. Polyketide synthase; part of the gene cluster that mediates the biosynthesis of cercosporin, a light-activated, non-host-selective toxin. The perylenequinone chromophore of cercosporin absorbs light energy to attain an electronically-activated triplet state and produces active oxygen species such as the hydroxyl radical, superoxide, hydrogen peroxide or singlet oxygen upon reaction with oxygen molecules. These reactive oxygen species cause damage to various cellular components including lipids, proteins and nucleic acids. The first step of cercosporin biosynthesis is performed by the polyketide synthase CTB1 which catalyzes the formation of nor-toralactone. The starter unit acyltransferase (SAT) domain of CTB1 initiates polyketide extension by the selective utilization of acetyl-CoA, which is elongated to the heptaketide in the beta-ketoacyl synthase (KS) domain by successive condensations with six malonyl units introduced by the malonyl acyltransferase (MAT) domain. The product template (PT) domain catalyzes C4-C9 and C2-C11 aldol cyclizations and dehydrations to a trihydroxynaphthalene, which is thought to be delivered to the thioesterase (TE) domain for product release. The bifunctional enzyme CTB3 then methylates nor-toralactone to toralactone before conducting an unusual oxidative aromatic ring opening. The O-methyltransferase CTB2 further methylates the nascent OH-6 of the CBT3 product, blocking further oxidation at this site before the reductase CTB6 reduces the 2-oxopropyl ketone at position C7, giving naphthalene. The FAD-dependent monooxygenase CTB5 in concert with the multicopper oxidase CTB12 are responsible for homodimerization of naphthalene with CTB7 installing the dioxepine moiety, finally producing cercosporin. The fasciclin domain-containing protein CTB11 might act with CTB5 and CTB12 whereas the roles of CTB9 and CTB10 have still to be elucidated. This is Non-reducing polyketide synthase CTB1 from Cercospora beticola (Sugarbeet leaf spot fungus).